We begin with the raw amino-acid sequence, 546 residues long: CTP synthase (546 aa).

Residues 1–266 (MTTRYIFVTG…DDLVVKRFGL (266 aa)) form an amidoligase domain region. Ser14 serves as a coordination point for CTP. Residue Ser14 coordinates UTP. ATP-binding positions include 15–20 (SLGKGI) and Asp72. The Mg(2+) site is built by Asp72 and Glu140. CTP contacts are provided by residues 147-149 (DIE), 187-192 (KTKPTQ), and Lys223. UTP-binding positions include 187-192 (KTKPTQ) and Lys223. ATP is bound at residue 239–241 (KDV). The Glutamine amidotransferase type-1 domain maps to 291-542 (VIGMVGKYIE…VAAASAHQKR (252 aa)). Gly352 is an L-glutamine binding site. Cys379 functions as the Nucleophile; for glutamine hydrolysis in the catalytic mechanism. Residues 380-383 (LGMQ), Glu403, and Arg470 each bind L-glutamine. Residues His515 and Glu517 contribute to the active site.

This sequence belongs to the CTP synthase family. As to quaternary structure, homotetramer.

It carries out the reaction UTP + L-glutamine + ATP + H2O = CTP + L-glutamate + ADP + phosphate + 2 H(+). The enzyme catalyses L-glutamine + H2O = L-glutamate + NH4(+). It catalyses the reaction UTP + NH4(+) + ATP = CTP + ADP + phosphate + 2 H(+). Its pathway is pyrimidine metabolism; CTP biosynthesis via de novo pathway; CTP from UDP: step 2/2. Its activity is regulated as follows. Allosterically activated by GTP, when glutamine is the substrate; GTP has no effect on the reaction when ammonia is the substrate. The allosteric effector GTP functions by stabilizing the protein conformation that binds the tetrahedral intermediate(s) formed during glutamine hydrolysis. Inhibited by the product CTP, via allosteric rather than competitive inhibition. Its function is as follows. Catalyzes the ATP-dependent amination of UTP to CTP with either L-glutamine or ammonia as the source of nitrogen. Regulates intracellular CTP levels through interactions with the four ribonucleotide triphosphates. This chain is CTP synthase, found in Shewanella sp. (strain ANA-3).